A 301-amino-acid chain; its full sequence is Coiled-coil domain-containing protein 69-B (301 aa).

The segment at 1 to 43 is disordered; that stretch reads MGSKTSKMCCPQLRKKKRQKAHKEGPSSQELNDLNAKSQGPNE. Gly-2 carries N-myristoyl glycine lipidation. Over residues 26 to 41 the composition is skewed to polar residues; it reads PSSQELNDLNAKSQGP. Coiled-coil stretches lie at residues 42 to 167 and 213 to 281; these read NELL…SILS and KSTM…NLYR.

This sequence belongs to the CCDC69 family.

Its subcellular location is the cytoplasm. It localises to the cytoskeleton. The protein localises to the spindle. The protein resides in the midbody. Its function is as follows. May act as a scaffold to regulate the recruitment and assembly of spindle midzone components. The protein is Coiled-coil domain-containing protein 69-B (ccdc69-b) of Xenopus laevis (African clawed frog).